A 272-amino-acid chain; its full sequence is Acetylglutamate kinase (272 aa).

Residues 46–47, R68, and N166 each bind substrate; that span reads GA.

Belongs to the acetylglutamate kinase family. ArgB subfamily.

It is found in the cytoplasm. It catalyses the reaction N-acetyl-L-glutamate + ATP = N-acetyl-L-glutamyl 5-phosphate + ADP. It functions in the pathway amino-acid biosynthesis; L-arginine biosynthesis; N(2)-acetyl-L-ornithine from L-glutamate: step 2/4. Catalyzes the ATP-dependent phosphorylation of N-acetyl-L-glutamate. The protein is Acetylglutamate kinase of Dehalococcoides mccartyi (strain CBDB1).